Here is a 36-residue protein sequence, read N- to C-terminus: Photosystem I reaction center subunit VIII (36 aa).

A helical transmembrane segment spans residues 8–28 (SLFVPLVGLVFPAIAMASLFL).

This sequence belongs to the PsaI family.

The protein localises to the plastid. It localises to the chloroplast thylakoid membrane. May help in the organization of the PsaL subunit. This chain is Photosystem I reaction center subunit VIII, found in Brassica oleracea (Wild cabbage).